The sequence spans 3841 residues: Transformation/transcription domain-associated protein (3841 aa).

2 disordered regions span residues 491 to 516 and 2002 to 2027; these read TPTV…PPAT and QQPE…MKRG. The segment covering 498 to 515 has biased composition (pro residues); sequence ALPPPAPPTPVTPAPPPA. The Bipartite nuclear localization signal motif lies at 2025-2040; that stretch reads KRGMSVDSAQDVKRFR. Residues 2671 to 3239 form the FAT domain; sequence VLKYLGKTHN…YFPIRTLYLT (569 aa). Positions 3249-3271 are disordered; that stretch reads KSDSGQQQPSSAAAQTHSASDPG. Positions 3251–3268 are enriched in low complexity; it reads DSGQQQPSSAAAQTHSAS. The PI3K/PI4K catalytic domain occupies 3482-3805; sequence MPRVEIVQKH…AVTAIMTRLH (324 aa). The tract at residues 3488–3494 is G-loop; the sequence is VQKHNTA. The tract at residues 3669–3677 is catalytic loop; it reads HLNRLNPEM. The interval 3689–3714 is activation loop; that stretch reads VSYFRFDINDATGDLDANRPVPFRLT. The FATC domain occupies 3809–3841; that stretch reads QFEGGESKVNTLVAAANSLDNLCRMDPAWHPWL.

It belongs to the PI3/PI4-kinase family. TRA1 subfamily.

It localises to the nucleus. In terms of biological role, adapter protein, which is found in various multiprotein chromatin complexes with histone acetyltransferase activity (HAT), which gives a specific tag for epigenetic transcription activation. May be required for the mitotic checkpoint and normal cell cycle progression. May play a role in the formation and maintenance of the auditory system. This chain is Transformation/transcription domain-associated protein, found in Danio rerio (Zebrafish).